The primary structure comprises 378 residues: MKILVDENMPYARDLFSRLGEVTAVPGRPIPVAQLADADALMVRSVTKVNESLLAGKPIKFVGTATAGTDHIDEAWLKQAGIGFSAAPGCNAIAVVEYVFSSLLMLAERDGFSLHERTVGIVGVGNVGRRLQARLEALGITTLLCDPPRADRGDEGDFRSLNELVQHADILTFHTPLFKDGPYKTLHLADEKLIRSLKPGAILINACRGAVVDNTALLTCLNEGQKLSVVLDVWEGEPELNVELLKKVDIGTPHIAGYTLEGKARGTTQVFEAYSKFIGHEQHVALDTLLPAPEFGRITLHGPLDQPTLKRLVHLVYDVRRDDAPLRKVAGIPGEFDKLRKNYLERREWSSLYVICDDASAASLLCKLGFNAVHHPAR.

The substrate site is built by serine 45 and threonine 66. Residues aspartate 146 and threonine 175 each coordinate NAD(+). The active site involves arginine 208. An NAD(+)-binding site is contributed by aspartate 232. Residue glutamate 237 is part of the active site. The active-site Proton donor is histidine 254. Residue glycine 257 coordinates NAD(+). Tyrosine 258 is a substrate binding site.

The protein belongs to the D-isomer specific 2-hydroxyacid dehydrogenase family. PdxB subfamily. Homodimer.

Its subcellular location is the cytoplasm. The enzyme catalyses 4-phospho-D-erythronate + NAD(+) = (R)-3-hydroxy-2-oxo-4-phosphooxybutanoate + NADH + H(+). It functions in the pathway cofactor biosynthesis; pyridoxine 5'-phosphate biosynthesis; pyridoxine 5'-phosphate from D-erythrose 4-phosphate: step 2/5. In terms of biological role, catalyzes the oxidation of erythronate-4-phosphate to 3-hydroxy-2-oxo-4-phosphonooxybutanoate. The polypeptide is Erythronate-4-phosphate dehydrogenase (Escherichia coli O7:K1 (strain IAI39 / ExPEC)).